We begin with the raw amino-acid sequence, 420 residues long: Odorant receptor 63a (420 aa).

Residues M1–R43 are Cytoplasmic-facing. Residues I44–L64 traverse the membrane as a helical segment. At A65–E76 the chain is on the extracellular side. The chain crosses the membrane as a helical span at residues T77–A97. Over H98 to Q150 the chain is Cytoplasmic. The helical transmembrane segment at I151–V171 threads the bilayer. The Extracellular portion of the chain corresponds to I172–C217. The helical transmembrane segment at S218 to L238 threads the bilayer. Topologically, residues H239–Q296 are cytoplasmic. A helical transmembrane segment spans residues F297 to N317. The N-linked (GlcNAc...) asparagine glycan is linked to N318. Residues N318–S320 lie on the Extracellular side of the membrane. The helical transmembrane segment at I321 to C341 threads the bilayer. Topologically, residues Y342 to L387 are cytoplasmic. A helical transmembrane segment spans residues D388 to G408. Over Q409–K420 the chain is Extracellular.

This sequence belongs to the insect chemoreceptor superfamily. Heteromeric odorant receptor channel (TC 1.A.69) family. Or63a subfamily. In terms of assembly, interacts with Orco. Complexes exist early in the endomembrane system in olfactory sensory neurons (OSNs), coupling these complexes to the conserved ciliary trafficking pathway.

It is found in the cell membrane. Functionally, odorant receptor which mediates acceptance or avoidance behavior, depending on its substrates. The odorant receptor repertoire encodes a large collection of odor stimuli that vary widely in identity, intensity, and duration. May form a complex with Orco to form odorant-sensing units, providing sensitive and prolonged odorant signaling and calcium permeability. Involved in the behavioral responses to butyl acetate, isoamyl acetate, and hexanoic acid. The protein is Odorant receptor 63a (Or63a) of Drosophila melanogaster (Fruit fly).